The following is a 99-amino-acid chain: Large ribosomal subunit protein bL27 (99 aa).

A disordered region spans residues 1-21 (MAHKKGGGSTRNGRDSRAKRL).

It belongs to the bacterial ribosomal protein bL27 family.

This chain is Large ribosomal subunit protein bL27, found in Thermomicrobium roseum (strain ATCC 27502 / DSM 5159 / P-2).